The chain runs to 136 residues: Histone H3.3 (136 aa).

Positions 1 to 43 are disordered; it reads MARTKQTARKSTGGKAPRKQLATKAARKSAPSTGGVKKPHRYR. The residue at position 5 (Lys5) is an N6,N6,N6-trimethyllysine; alternate. At Lys5 the chain carries N6,N6-dimethyllysine; alternate. 2 positions are modified to N6-methyllysine; alternate: Lys5 and Lys10. Position 10 is an N6-acetyllysine; alternate (Lys10). Phosphoserine is present on Ser11. Lys15 is subject to N6,N6-dimethyllysine; alternate. An N6-acetyllysine; alternate mark is found at Lys15, Lys19, Lys24, Lys28, and Lys37. Residues Lys19, Lys24, Lys28, and Lys37 each carry the N6-methyllysine; alternate modification. An N6,N6,N6-trimethyllysine; alternate mark is found at Lys28 and Lys37. N6,N6-dimethyllysine; alternate occurs at positions 28 and 37. 2 positions are modified to N6-acetyllysine: Lys57 and Lys65. Lys80 is subject to N6,N6,N6-trimethyllysine; alternate. An N6,N6-dimethyllysine; alternate modification is found at Lys80. The residue at position 80 (Lys80) is an N6-methyllysine; alternate.

This sequence belongs to the histone H3 family. In terms of assembly, the nucleosome is a histone octamer containing two molecules each of H2A, H2B, H3 and H4 assembled in one H3-H4 heterotetramer and two H2A-H2B heterodimers. The octamer wraps approximately 147 bp of DNA. Post-translationally, phosphorylated at Ser-11. This is required for transcriptional activation through TBP recruitment to the promoters. Phosphorylation at Ser-11 also promotes subsequent acetylation at Lys-15. Mono-, di- and trimethylation of Lys-5 by the COMPASS complex activates gene expression by regulating transcription elongation and plays a role in telomere length maintenance. Lys-5 methylation enrichment correlates with transcription levels, and occurs in a 5' to 3' gradient with tri-methyl enrichment at the 5'-end of genes, shifting to di-methyl and then mono-methyl. The COMPASS mediated di and trimethylation of Lys-5 requires histone H2B monoubiquitination. Methylation of Lys-37 by SET2 represses gene expression. Methylation of Lys-80 by DOT1 is required for association of SIR proteins with telomeric regions and for telomeric silencing. In terms of processing, acetylation of histone H3 leads to transcriptional activation. Acetylation at Lys-15 is promoted by the phosphorylation at Ser-11. Acetylation at Lys-57 occurs predominantly in newly synthesized H3 molecule during G1, S and G2/M of the cell cycle and may be involved in DNA repair.

The protein resides in the nucleus. Its subcellular location is the chromosome. Core component of nucleosome. Nucleosomes wrap and compact DNA into chromatin, limiting DNA accessibility to the cellular machineries which require DNA as a template. Histones thereby play a central role in transcription regulation, DNA repair, DNA replication and chromosomal stability. DNA accessibility is regulated via a complex set of post-translational modifications of histones, also called histone code, and nucleosome remodeling. This is Histone H3.3 (HHT3) from Trichinella pseudospiralis (Parasitic roundworm).